A 547-amino-acid chain; its full sequence is 2-succinyl-5-enolpyruvyl-6-hydroxy-3-cyclohexene-1-carboxylate synthase (547 aa).

Belongs to the TPP enzyme family. MenD subfamily. In terms of assembly, homodimer. Mg(2+) serves as cofactor. Requires Mn(2+) as cofactor. The cofactor is thiamine diphosphate.

The enzyme catalyses isochorismate + 2-oxoglutarate + H(+) = 5-enolpyruvoyl-6-hydroxy-2-succinyl-cyclohex-3-ene-1-carboxylate + CO2. It functions in the pathway quinol/quinone metabolism; 1,4-dihydroxy-2-naphthoate biosynthesis; 1,4-dihydroxy-2-naphthoate from chorismate: step 2/7. The protein operates within quinol/quinone metabolism; menaquinone biosynthesis. Functionally, catalyzes the thiamine diphosphate-dependent decarboxylation of 2-oxoglutarate and the subsequent addition of the resulting succinic semialdehyde-thiamine pyrophosphate anion to isochorismate to yield 2-succinyl-5-enolpyruvyl-6-hydroxy-3-cyclohexene-1-carboxylate (SEPHCHC). The sequence is that of 2-succinyl-5-enolpyruvyl-6-hydroxy-3-cyclohexene-1-carboxylate synthase from Mycobacterium sp. (strain KMS).